The sequence spans 68 residues: Beta-toxin Cl13 (68 aa).

The 66-residue stretch at 1 to 66 (KEGYLVDYHT…VWPLPNKRCK (66 aa)) folds into the LCN-type CS-alpha/beta domain. 4 cysteine pairs are disulfide-bonded: Cys12–Cys65, Cys16–Cys41, Cys25–Cys46, and Cys29–Cys48. A Lysine amide modification is found at Lys66.

It belongs to the long (4 C-C) scorpion toxin superfamily. Sodium channel inhibitor family. Beta subfamily. Expressed by the venom gland.

The protein localises to the secreted. In terms of biological role, beta toxins bind voltage-independently at site-4 of sodium channels (Nav) and shift the voltage of activation toward more negative potentials thereby affecting sodium channel activation and promoting spontaneous and repetitive firing. Inhibits sodium channels Nav1.4/SCN4A, Nav1.5/SCN5A and Nav1.6/SCN8A. Also has a weak inhibitory effect on Nav1.2/SCN2A. Is lethal to mice. The protein is Beta-toxin Cl13 of Centruroides limpidus (Mexican scorpion).